Here is a 181-residue protein sequence, read N- to C-terminus: Large ribosomal subunit protein uL5 (181 aa).

This sequence belongs to the universal ribosomal protein uL5 family. In terms of assembly, part of the 50S ribosomal subunit; part of the 5S rRNA/L5/L18/L25 subcomplex. Contacts the 5S rRNA and the P site tRNA. Forms a bridge to the 30S subunit in the 70S ribosome.

In terms of biological role, this is one of the proteins that bind and probably mediate the attachment of the 5S RNA into the large ribosomal subunit, where it forms part of the central protuberance. In the 70S ribosome it contacts protein S13 of the 30S subunit (bridge B1b), connecting the 2 subunits; this bridge is implicated in subunit movement. Contacts the P site tRNA; the 5S rRNA and some of its associated proteins might help stabilize positioning of ribosome-bound tRNAs. The polypeptide is Large ribosomal subunit protein uL5 (Nitrosococcus oceani (strain ATCC 19707 / BCRC 17464 / JCM 30415 / NCIMB 11848 / C-107)).